The chain runs to 279 residues: Shikimate dehydrogenase (NADP(+)) (279 aa).

Shikimate-binding positions include 20 to 22 and threonine 67; that span reads SRS. The active-site Proton acceptor is the lysine 71. Residue aspartate 83 coordinates NADP(+). Shikimate-binding residues include asparagine 92 and aspartate 108. Residues 134-138 and leucine 223 contribute to the NADP(+) site; that span reads GAGGA. Residue tyrosine 225 coordinates shikimate. Glycine 246 contributes to the NADP(+) binding site.

Belongs to the shikimate dehydrogenase family. As to quaternary structure, homodimer.

The enzyme catalyses shikimate + NADP(+) = 3-dehydroshikimate + NADPH + H(+). It functions in the pathway metabolic intermediate biosynthesis; chorismate biosynthesis; chorismate from D-erythrose 4-phosphate and phosphoenolpyruvate: step 4/7. Functionally, involved in the biosynthesis of the chorismate, which leads to the biosynthesis of aromatic amino acids. Catalyzes the reversible NADPH linked reduction of 3-dehydroshikimate (DHSA) to yield shikimate (SA). The protein is Shikimate dehydrogenase (NADP(+)) of Cereibacter sphaeroides (strain KD131 / KCTC 12085) (Rhodobacter sphaeroides).